The following is a 121-amino-acid chain: Structural protein p14.5 (121 aa).

2 disordered regions span residues 1–24 and 84–121; these read MADF…IGSL and TSLV…HKSK. Ala-2 carries the post-translational modification N-acetylalanine; by host. Residues 104–121 are compositionally biased toward basic residues; that stretch reads KPKKKKHLFPKLSSHKSK.

It belongs to the asfivirus structural protein p14.5 family. In terms of assembly, interacts with the major capsid protein. Interacts with host IRF3; this interaction interferes with the recruitment of IRF3 to TBK1. In terms of processing, acetylated.

Its subcellular location is the virion. Functionally, structural protein required for transport of intracellular particles from the assembly sites to the plasma membrane. Binds to both ssDNA and dsDNA. Suppressed the activation of the cGAS/STING pathway by interfering with the recruitment of IRF3 to TBK1, which in turn suppresses IRF3 phosphorylation, decreasing interferon production. This chain is Structural protein p14.5, found in Ornithodoros (relapsing fever ticks).